An 813-amino-acid polypeptide reads, in one-letter code: Ankyrin repeat domain-containing protein SOWAHB (813 aa).

Disordered regions lie at residues 142–256 and 400–436; these read SAAP…QSLS and ETCG…DSHK. A compositionally biased stretch (basic and acidic residues) spans 158–176; it reads MSEKARVNPSHWDTKRYYP. The segment covering 177–189 has biased composition (pro residues); that stretch reads EDPPVPDSLPVSP. A compositionally biased stretch (polar residues) spans 191-202; that stretch reads CTNTRQSSFTST. Low complexity predominate over residues 208-244; the sequence is HSLSSNNLSSSFSSPESPGLVAKPYNASPSPAGSSPN. The segment covering 245-256 has biased composition (polar residues); sequence IREQTPKSQSLS. Positions 400–416 are enriched in acidic residues; that stretch reads ETCGSEESDSGEGGDCD. ANK repeat units lie at residues 657–686 and 696–726; these read TGYT…KAGI and NGYT…NVKV.

It belongs to the SOWAH family.

This Xenopus laevis (African clawed frog) protein is Ankyrin repeat domain-containing protein SOWAHB (sowahb).